The primary structure comprises 639 residues: C-type lectin domain-containing protein 160 (639 aa).

A signal peptide spans M1–T19. 2 consecutive VWFA domains span residues D31–G178 and D289–V474. The region spanning K491–Y618 is the C-type lectin domain. Residues C594 and C614 are joined by a disulfide bond.

The protein localises to the secreted. The polypeptide is C-type lectin domain-containing protein 160 (clec-160) (Caenorhabditis elegans).